The chain runs to 406 residues: Cholinephosphotransferase 1 (406 aa).

An N-acetylalanine modification is found at alanine 2. The Cytoplasmic segment spans residues 2-62; that stretch reads AAGAGARPAP…LLQWIPLWMA (61 aa). Residues 63 to 83 form a helical membrane-spanning segment; that stretch reads PNSITLLGLAINMLTTLVLIS. Asparagine 64 serves as a coordination point for CDP-choline. Topologically, residues 84–93 are lumenal; sequence YCPTVTEEAP. The helical transmembrane segment at 94–118 threads the bilayer; sequence YWTYLLCALGLFIYQSLDAIDGKQA. Positions 111 and 114 each coordinate Mg(2+). Arginine 119 is a CDP-choline binding site. Topologically, residues 119–125 are cytoplasmic; it reads RRTNSCS. A helical transmembrane segment spans residues 126 to 150; it reads PLGELFDHGCDSLSTVFMAVGASIA. Position 132 (aspartate 132) interacts with Mg(2+). Histidine 133 acts as the Proton acceptor in catalysis. A Mg(2+)-binding site is contributed by aspartate 136. The Lumenal segment spans residues 151–160; the sequence is VRLGTHPDWL. A helical transmembrane segment spans residues 161–179; it reads FFCSFIGMFMFYCAHWQTY. The Cytoplasmic portion of the chain corresponds to 180 to 190; sequence VSGVLRFGKVD. Residues 191–207 traverse the membrane as a helical segment; it reads VTEIQIALVIVFVLSTF. Topologically, residues 208-222 are lumenal; that stretch reads GGATMWDYTIPILEI. Residues 223–248 traverse the membrane as a helical segment; the sequence is KLKILPVLGVVGGAIFSCSNYFHVIL. Residues 249-265 are Cytoplasmic-facing; the sequence is HGGVGKNGSTIAGTSVL. Residues 266-281 form a helical membrane-spanning segment; it reads SPGLHIGIIIILAIMI. Over 282-293 the chain is Lumenal; the sequence is YKKSATNLFEKH. Residues 294 to 316 form a helical membrane-spanning segment; sequence PCLYTLMFGCVFAKVSQKLVIAH. The Cytoplasmic portion of the chain corresponds to 317-329; sequence MTKSELYLQDTVF. A helical transmembrane segment spans residues 330–339; sequence IGPGLLFLDQ. At 340-346 the chain is on the lumenal side; that stretch reads YFNNFVD. A helical transmembrane segment spans residues 347–376; sequence EYIVLWIAMVISSLDMMRYFSALCLQISRH. Over 377–406 the chain is Cytoplasmic; sequence LHLSIFKTSCHQAPEQVQVLPPKSHQNNMD.

Belongs to the CDP-alcohol phosphatidyltransferase class-I family. Requires Mg(2+) as cofactor. It depends on Mn(2+) as a cofactor.

Its subcellular location is the golgi apparatus membrane. It carries out the reaction CDP-choline + a 1,2-diacyl-sn-glycerol = a 1,2-diacyl-sn-glycero-3-phosphocholine + CMP + H(+). The enzyme catalyses 1-octadecanoyl-2-(5Z,8Z,11Z,14Z-eicosatetraenoyl)-sn-glycerol + CDP-choline = 1-octadecanoyl-2-(5Z,8Z,11Z,14Z-eicosatetraenoyl)-sn-glycero-3-phosphocholine + CMP + H(+). The catalysed reaction is 1-hexadecanoyl-2-(9Z-octadecenoyl)-sn-glycerol + CDP-choline = 1-hexadecanoyl-2-(9Z-octadecenoyl)-sn-glycero-3-phosphocholine + CMP + H(+). It catalyses the reaction 1-hexadecanoyl-2-(4Z,7Z,10Z,13Z,16Z,19Z-docosahexaenoyl)-sn-glycerol + CDP-choline = 1-hexadecanoyl-2-(4Z,7Z,10Z,13Z,16Z,19Z-docosahexaenoyl)-sn-glycero-3-phosphocholine + CMP + H(+). It carries out the reaction 1,2-dioctanoyl-sn-glycerol + CDP-choline = 1,2-dioctanoyl-sn-glycero-3-phosphocholine + CMP + H(+). The protein operates within phospholipid metabolism; phosphatidylcholine biosynthesis; phosphatidylcholine from phosphocholine: step 2/2. Functionally, catalyzes the final step of de novo phosphatidylcholine (PC) synthesis, i.e. the transfer of choline phosphate from CDP-choline to the free hydroxyl of a diacylglycerol (DAG), producing a PC. It thereby plays a central role in the formation and maintenance of vesicular membranes. The polypeptide is Cholinephosphotransferase 1 (CHPT1) (Bos taurus (Bovine)).